Here is a 162-residue protein sequence, read N- to C-terminus: Ubiquitin D (162 aa).

2 Ubiquitin-like domains span residues 3–78 (SVRT…LKVV) and 87–160 (LFLV…THCT).

It belongs to the ubiquitin D family. Interacts directly with the 26S proteasome. Interacts with NUB1; this interaction facilitates the linking of UBD-conjugated target protein to the proteasome complex and accelerates its own degradation and that of its conjugates. Interacts (via ubiquitin-like 1 domain) with the spindle checkpoint protein MAD2L1 during mitosis. Present in aggresomes of proteasome inhibited cells. Interacts with HDAC6 under proteasome impairment conditions. Forms a thioester with UBA6 in cells stimulated with tumor necrosis factor-alpha (TNFa) and interferon-gamma (IFNg). Interacts with SQSTM1 and TP53/p53. Post-translationally, can be acetylated. In terms of tissue distribution, mostly expressed in thymus and intestine.

It localises to the nucleus. The protein localises to the cytoplasm. Ubiquitin-like protein modifier which can be covalently attached to target proteins and subsequently leads to their degradation by the 26S proteasome, in a NUB1-dependent manner. Conjugation to the target protein is activated by UBA6 via adenylation of its C-terminal glycine. Probably functions as a survival factor. Promotes the expression of the proteasome subunit beta type-9 (PSMB9/LMP2). Regulates TNF-alpha-induced and LPS-mediated activation of the central mediator of innate immunity NF-kappa-B by promoting TNF-alpha-mediated proteasomal degradation of ubiquitinated-I-kappa-B-alpha. Required for TNF-alpha-induced p65 nuclear translocation in renal tubular epithelial cells (RTECs). May be involved in dendritic cell (DC) maturation, the process by which immature dendritic cells differentiate into fully competent antigen-presenting cells that initiate T-cell responses. Mediates mitotic non-disjunction and chromosome instability, in long-term in vitro culture and cancers, by abbreviating mitotic phase and impairing the kinetochore localization of MAD2L1 during the prometaphase stage of the cell cycle. May be involved in the formation of aggresomes when proteasome is saturated or impaired. Mediates apoptosis in a caspase-dependent manner, especially in renal epithelium and tubular cells during renal diseases. The polypeptide is Ubiquitin D (Ubd) (Mus musculus (Mouse)).